We begin with the raw amino-acid sequence, 100 residues long: Urease subunit gamma (100 aa).

It belongs to the urease gamma subunit family. In terms of assembly, heterotrimer of UreA (gamma), UreB (beta) and UreC (alpha) subunits. Three heterotrimers associate to form the active enzyme.

It localises to the cytoplasm. The catalysed reaction is urea + 2 H2O + H(+) = hydrogencarbonate + 2 NH4(+). It participates in nitrogen metabolism; urea degradation; CO(2) and NH(3) from urea (urease route): step 1/1. The sequence is that of Urease subunit gamma from Methylocella silvestris (strain DSM 15510 / CIP 108128 / LMG 27833 / NCIMB 13906 / BL2).